A 212-amino-acid polypeptide reads, in one-letter code: Proteasome subunit beta 2 (212 aa).

Positions 1 to 15 are cleaved as a propeptide — removed in mature form; by autocatalysis; sequence MLHHPGTGQLRALKG. The active-site Nucleophile is the threonine 16.

It belongs to the peptidase T1B family. As to quaternary structure, the 20S proteasome core is composed of 14 alpha and 14 beta subunits that assemble into four stacked heptameric rings, resulting in a barrel-shaped structure. The two inner rings, each composed of seven catalytic beta subunits, are sandwiched by two outer rings, each composed of seven alpha subunits. The catalytic chamber with the active sites is on the inside of the barrel. Has a gated structure, the ends of the cylinder being occluded by the N-termini of the alpha-subunits. Is capped at one or both ends by the proteasome regulatory ATPase, PAN.

The protein resides in the cytoplasm. It catalyses the reaction Cleavage of peptide bonds with very broad specificity.. With respect to regulation, the formation of the proteasomal ATPase PAN-20S proteasome complex, via the docking of the C-termini of PAN into the intersubunit pockets in the alpha-rings, triggers opening of the gate for substrate entry. Interconversion between the open-gate and close-gate conformations leads to a dynamic regulation of the 20S proteasome proteolysis activity. Functionally, component of the proteasome core, a large protease complex with broad specificity involved in protein degradation. The protein is Proteasome subunit beta 2 of Hyperthermus butylicus (strain DSM 5456 / JCM 9403 / PLM1-5).